The sequence spans 100 residues: Large ribosomal subunit protein uL23 (100 aa).

Belongs to the universal ribosomal protein uL23 family. Part of the 50S ribosomal subunit. Contacts protein L29, and trigger factor when it is bound to the ribosome.

In terms of biological role, one of the early assembly proteins it binds 23S rRNA. One of the proteins that surrounds the polypeptide exit tunnel on the outside of the ribosome. Forms the main docking site for trigger factor binding to the ribosome. This Xylella fastidiosa (strain M23) protein is Large ribosomal subunit protein uL23.